The following is a 239-amino-acid chain: Increased recombination centers protein 22-2 (239 aa).

The N-terminal stretch at 1-19 (MKLSTIFTAFAATIATVAG) is a signal peptide. Residues 20–161 (YETTGSKQTV…AAVSFFDPRL (142 aa)) are Lumenal-facing. The chain crosses the membrane as a helical span at residues 162 to 182 (IFLELVLLITFAGLIYVGYEI). At 183–239 (WGKQYFKGVAPVKAKKVSAAKASSPVATGPSTTSATGYDTNWIPESHLKQKKTKKVN) the chain is on the cytoplasmic side. A disordered region spans residues 202-222 (AKASSPVATGPSTTSATGYDT). Residues 211 to 221 (GPSTTSATGYD) are compositionally biased toward polar residues.

The protein belongs to the IRC22 family.

The protein resides in the endoplasmic reticulum membrane. In terms of biological role, is probably involved in a pathway contributing to genomic integrity. The chain is Increased recombination centers protein 22-2 (IRC22-2) from Candida albicans (strain SC5314 / ATCC MYA-2876) (Yeast).